The chain runs to 372 residues: MALRFEILHQSKKSRARVGRIETAHGYIDTPAFVPVATNGALKGVLDHSNIPLMFCNTYHLIVHPGAEAIAAMGGLHQFIGRNAPIITDSGGFQIFSLAYGSVAEEIKSCGKKKGGNTIIKVNDDGVHFKSYRDGRKLFLSPEISVQAQKDLGADIILPLDELLPFHADPTYFHQSSQRTYVWEKRSLDYHLKNPGIQSMYGVIHGGTFPDQRKLGCKFVEDLPFDGSAIGGSLGKNLQDIVEVVGVTAANLSAERPRHLLGIGDLPSIWATVGFGIDSFDSSYPTKAARHGMILTSQGPLKINNQRYSSDLNPIEPGCSCLACSQGITRAYLRHLFKVHEPNAGIWASIHNMHHMQKVMREIREGILNDRI.

The active-site Proton acceptor is D89. Substrate-binding positions include 89–93 (DSGGF), D161, and G232. The segment at 262–268 (GIGDLPS) is RNA binding. D281 functions as the Nucleophile in the catalytic mechanism. Residues 286-290 (TKAAR) are RNA binding; important for wobble base 34 recognition. Zn(2+)-binding residues include C319, C321, C324, and H351.

The protein belongs to the queuine tRNA-ribosyltransferase family. In terms of assembly, homodimer. Within each dimer, one monomer is responsible for RNA recognition and catalysis, while the other monomer binds to the replacement base PreQ1. Requires Zn(2+) as cofactor.

It carries out the reaction 7-aminomethyl-7-carbaguanine + guanosine(34) in tRNA = 7-aminomethyl-7-carbaguanosine(34) in tRNA + guanine. It functions in the pathway tRNA modification; tRNA-queuosine biosynthesis. Functionally, catalyzes the base-exchange of a guanine (G) residue with the queuine precursor 7-aminomethyl-7-deazaguanine (PreQ1) at position 34 (anticodon wobble position) in tRNAs with GU(N) anticodons (tRNA-Asp, -Asn, -His and -Tyr). Catalysis occurs through a double-displacement mechanism. The nucleophile active site attacks the C1' of nucleotide 34 to detach the guanine base from the RNA, forming a covalent enzyme-RNA intermediate. The proton acceptor active site deprotonates the incoming PreQ1, allowing a nucleophilic attack on the C1' of the ribose to form the product. After dissociation, two additional enzymatic reactions on the tRNA convert PreQ1 to queuine (Q), resulting in the hypermodified nucleoside queuosine (7-(((4,5-cis-dihydroxy-2-cyclopenten-1-yl)amino)methyl)-7-deazaguanosine). The polypeptide is Queuine tRNA-ribosyltransferase (Chlamydia trachomatis serovar L2 (strain ATCC VR-902B / DSM 19102 / 434/Bu)).